The sequence spans 357 residues: UDP-N-acetylglucosamine--N-acetylmuramyl-(pentapeptide) pyrophosphoryl-undecaprenol N-acetylglucosamine transferase (357 aa).

Residues 12–14, R166, S196, and Q291 each bind UDP-N-acetyl-alpha-D-glucosamine; that span reads TAG.

It belongs to the glycosyltransferase 28 family. MurG subfamily.

The protein localises to the cell membrane. It carries out the reaction di-trans,octa-cis-undecaprenyl diphospho-N-acetyl-alpha-D-muramoyl-L-alanyl-D-glutamyl-meso-2,6-diaminopimeloyl-D-alanyl-D-alanine + UDP-N-acetyl-alpha-D-glucosamine = di-trans,octa-cis-undecaprenyl diphospho-[N-acetyl-alpha-D-glucosaminyl-(1-&gt;4)]-N-acetyl-alpha-D-muramoyl-L-alanyl-D-glutamyl-meso-2,6-diaminopimeloyl-D-alanyl-D-alanine + UDP + H(+). It functions in the pathway cell wall biogenesis; peptidoglycan biosynthesis. Functionally, cell wall formation. Catalyzes the transfer of a GlcNAc subunit on undecaprenyl-pyrophosphoryl-MurNAc-pentapeptide (lipid intermediate I) to form undecaprenyl-pyrophosphoryl-MurNAc-(pentapeptide)GlcNAc (lipid intermediate II). The polypeptide is UDP-N-acetylglucosamine--N-acetylmuramyl-(pentapeptide) pyrophosphoryl-undecaprenol N-acetylglucosamine transferase (Geobacillus kaustophilus (strain HTA426)).